We begin with the raw amino-acid sequence, 400 residues long: Spermatogenic leucine zipper protein 1 (400 aa).

The interval 1–27 is disordered; the sequence is MADSDSSSEMPAHSPSPSPIPCAKQKP. The residue at position 106 (S106) is a Phosphoserine. Residues 116 to 127 are helix-loop-helix motif; that stretch reads RNKLRFKDDLFI. Residues 128–193 are basic motif; that stretch reads HFDPERENTM…HIRGEYRKLR (66 aa). 2 coiled-coil regions span residues 182–231 and 268–293; these read SVHI…KDIV and LIAALLENECQILQQRVDILRELHLH. Position 207 is a phosphoserine (S207). The leucine-zipper stretch occupies residues 252-273; sequence LEEQVKKLSQDTHSLHLIAALL. The tract at residues 295–332 is disordered; it reads AGPGHEKPLQTSGEQDKKCGEQDKKCGEQDKKCGEQDK.

In terms of assembly, interacts with PPP1CC isoform gamma-2. Post-translationally, phosphorylated by MAPK1/ERK2 and MAPK3/ERK1.

The protein resides in the cytoplasm. It is found in the nucleus. Its function is as follows. Transcription factor that binds to the DNA sequence 5'-CANNTG-3'(E box) and the G-box motif. May play an important role in the regulation of cell proliferation and differentiation during spermatogenesis. This Rattus norvegicus (Rat) protein is Spermatogenic leucine zipper protein 1 (Spz1).